Here is a 47-residue protein sequence, read N- to C-terminus: Protein YqgG (47 aa).

The polypeptide is Protein YqgG (Escherichia coli (strain K12)).